An 865-amino-acid polypeptide reads, in one-letter code: MSMNSAQIRDAFLNYFAERGHEKVPSASMIPGNDPTLLFTNAGMVPFKDVFLGTDKRRYDKATSAQRCLRAGGKHNDLENVGYTARHHTFFEMMGNFSFGDYFKKQAIQYAWDFLTKELKLPAEKLWVTVFTEDDEAYDIWVKDIGVPEDRISRIGEKDNFWSMGDTGPCGPCSEVFYDHGEEVWGGPPGTPEEDGDRYIEIWNLVFMQYNRQADGTLEPLPDPSIDTGMGLERISAIMQNVHSNYEIDLFQALIKAAAEIIGTNDLDNKSLRVIADHIRSCSFLITDGVMPSNEGRGYVLRRIIRRAVRHGHLLGAKDTFFFRLVDELARQMGEAYPELEQKKQIIKDALEREEQQFARTLERGLAILSDEIGELKGNVIPGDVVFKLYDTYGFPVDLTADIAREQELTIDEQGFEQAMSEQRQRAQQASQFGMDYNQQLKSDNKTAFTGYDDVVGQAKVVELFKDGKPVEQLQAGENGIVVLSETPFYAESGGQIGDKGVLVANGPAFEVTDTQYIGKAIAHHGVAKAAVKLSDSVKAEIDSERRENIKRNHSATHLLHAALRNLLGEHVTQKGSLVEADKMRFDFSHFEPVTTEQLAQLEREVNAQVRANLPLQTQLMAIDEAKEAGAMALFGEKYDEQVRVVRMGDFSMELCGGTHVKATGDIGLFRITSEGGIASGVRRIEVVTGEAAVRYTQQQQSVLQQIAGELKTEPSSVAEKVQQLQHKFRELERKNEQLQQKLAQQAGGGLIAQAVDINGVKAIIAELDQADPKSLRGLVDDLKNQMGSGIVLLGTANGDKVSLIAGVTTDLTSKVKAGDIVNQAANVVGGKGGGRPDMAQAGGSLPEQLNEALATATTWLQQQL.

Residues H554, H558, C656, and H660 each coordinate Zn(2+).

Belongs to the class-II aminoacyl-tRNA synthetase family. Zn(2+) is required as a cofactor.

The protein resides in the cytoplasm. The catalysed reaction is tRNA(Ala) + L-alanine + ATP = L-alanyl-tRNA(Ala) + AMP + diphosphate. Its function is as follows. Catalyzes the attachment of alanine to tRNA(Ala) in a two-step reaction: alanine is first activated by ATP to form Ala-AMP and then transferred to the acceptor end of tRNA(Ala). Also edits incorrectly charged Ser-tRNA(Ala) and Gly-tRNA(Ala) via its editing domain. The sequence is that of Alanine--tRNA ligase from Idiomarina loihiensis (strain ATCC BAA-735 / DSM 15497 / L2-TR).